The sequence spans 475 residues: Ribulose bisphosphate carboxylase large chain (475 aa).

A propeptide spanning residues 1 to 2 is cleaved from the precursor; the sequence is MS. Proline 3 is subject to N-acetylproline. An N6,N6,N6-trimethyllysine modification is found at lysine 14. Substrate-binding residues include asparagine 123 and threonine 173. Lysine 175 acts as the Proton acceptor in catalysis. Lysine 177 contributes to the substrate binding site. Positions 201, 203, and 204 each coordinate Mg(2+). An N6-carboxylysine modification is found at lysine 201. Histidine 294 serves as the catalytic Proton acceptor. Residues arginine 295, histidine 327, and serine 379 each contribute to the substrate site.

The protein belongs to the RuBisCO large chain family. Type I subfamily. In terms of assembly, heterohexadecamer of 8 large chains and 8 small chains; disulfide-linked. The disulfide link is formed within the large subunit homodimers. Requires Mg(2+) as cofactor. Post-translationally, the disulfide bond which can form in the large chain dimeric partners within the hexadecamer appears to be associated with oxidative stress and protein turnover.

It localises to the plastid. It is found in the chloroplast. The enzyme catalyses 2 (2R)-3-phosphoglycerate + 2 H(+) = D-ribulose 1,5-bisphosphate + CO2 + H2O. It catalyses the reaction D-ribulose 1,5-bisphosphate + O2 = 2-phosphoglycolate + (2R)-3-phosphoglycerate + 2 H(+). Functionally, ruBisCO catalyzes two reactions: the carboxylation of D-ribulose 1,5-bisphosphate, the primary event in carbon dioxide fixation, as well as the oxidative fragmentation of the pentose substrate in the photorespiration process. Both reactions occur simultaneously and in competition at the same active site. This chain is Ribulose bisphosphate carboxylase large chain, found in Afrocarpus gracilior (African fern pine).